Consider the following 484-residue polypeptide: Tribbles (484 aa).

Polar residues predominate over residues 1 to 23; it reads MDNSSGQNSRTASSASTSKIVNY. The tract at residues 1-51 is disordered; sequence MDNSSGQNSRTASSASTSKIVNYSSPVSPGVAAATSSSSSSSSSGMSSSQE. Over residues 24–49 the composition is skewed to low complexity; sequence SSPVSPGVAAATSSSSSSSSSGMSSS. In terms of domain architecture, Protein kinase spans 129–397; the sequence is YRHLVDLTAS…ASHIFLTPWL (269 aa). Acidic residues-rich tracts occupy residues 420–437 and 475–484; these read AEED…DEEG and PEPDTDVDMG. Disordered stretches follow at residues 420-443 and 464-484; these read AEED…PLGD and MAQN…VDMG.

It belongs to the protein kinase superfamily. CAMK Ser/Thr protein kinase family. Tribbles subfamily. Interacts with slbo. Interacts with Akt1. Expressed throughout the brain with highest levels of expression detected in the cell body rind and lower levels of expression detected in the neurophil (at protein level).

The protein localises to the nucleus. It is found in the cytoplasm. It localises to the cell cortex. Functionally, adapter protein that negatively regulates different signaling pathways to coordinate cell differentiation, proliferation, migration and growth. Functions by binding to key regulatory proteins and either blocks their activity or regulates their turnover by the proteasome. In various developing tissues functions as a cell cycle regulator that mediates cell proliferation according to the requirements of the developmental program. Acts by inducing the proteasomal degradation of the CD25 mitotic activators stg and twe at critical stages of development to delay entry into mitosis and thus mediate cell proliferation. During gastrulation, negatively regulates stg to delay mitosis in the ventral region of the embryonic mesoderm thus allowing invagination to be completed before cell division takes place. Delaying stg-dependent mitosis during bristle development and in migrating germline pole cells also arrests their cell divisions, whereas in cystocytes it promotes their cell divisions. Involved in the regulation of the mid-blastula transition; promotes the destruction of twe resulting in the cell cycle arrest in G2 of cycle 14 which delays mitosis and thus reduces cell proliferation allowing cell fate specification and morphogenesis to take place. In germline cells, blocks border cell migration during oogenesis by binding to slbo/C/EBP and promoting its ubiquitination and degradation by the proteasome. May function in a negative feedback loop with slbo to coordinate proper border cell migration. During tissue growth negatively regulates insulin signaling by binding to Akt1 and blocking its phosphorylation-dependent activation. However it may also function downstream in the insulin signaling pathway, acting with Akt1 to direct foxo degradation. Essential for the proper formation of operant place and aversive olfactory memories. The sequence is that of Tribbles from Drosophila melanogaster (Fruit fly).